We begin with the raw amino-acid sequence, 764 residues long: MSAARQPSPTVRDKAAPEPAAPAAPKGARAPRARRAAPPHGVRPAPALAAEERARLLEGRHHDPHAVLGARTQRGGVAFRVLRPYAKAVTVVAKGLRTELVDEGDGLFSGLLPLTGVPDYRLLVTYDSDEIEVHDPYRFLPALGELDLHLIGEGRHEELWTALGSQPMEHQGVAGTRFTVWAPNALGVRVTGDFSYWDAVAYPMRSLGASGVWELFLPGVAEGALYKYEITRPDGGRTLRADPMARYAEVPPANASIVTASRYEWQDAEWMARRGALAPHQAPMSVYELHLASWRPGLSYRQLAEQLPAYVKELGFTHVELMPVAEHPFGGSWGYQVTGFYAPTSRMGTPDDFRFLVDALHRAGIGVIVDWVPAHFPRDDWALAEFDGRPLYEHQDPRRAAHPDWGTLEFDYGRKEVRNFLVANAVYWCQEFHVDGLRADAVASMLYLDYSRDEGDWSPNAHGGREDLDAVALLQEMNATVYRRFPGVVTIAEESTAWDGVTRPTDSGGLGFGLKWNMGWMHDTLRYVSKEPVHRKYHHHDMTFGMVYAFSENFVLPISHDEVVHGKRSLVSKMPGDWWQQRATHRAYLGFMWAHPGKQLLFMGQEFAQGSEWSETYGPDWWVLDSSYPAAGDHLGVRSLVRDLNRTYTASPALWERDSVPEGFAWVEADAADDNVFAFLRFARDGSPLLCVSNFSPVVRHGYRIGVPQEVGQWREVLNTDLEPYGGSGVHHARALRPEPVPAQGRAVSLRMTLPPMATVWLRP.

The disordered stretch occupies residues 1-46 (MSAARQPSPTVRDKAAPEPAAPAAPKGARAPRARRAAPPHGVRPAP). Residues 17–28 (PEPAAPAAPKGA) show a composition bias toward low complexity. Asp440 functions as the Nucleophile in the catalytic mechanism. Residue Glu493 is the Proton donor of the active site.

It belongs to the glycosyl hydrolase 13 family. GlgB subfamily. In terms of assembly, monomer.

It carries out the reaction Transfers a segment of a (1-&gt;4)-alpha-D-glucan chain to a primary hydroxy group in a similar glucan chain.. The protein operates within glycan biosynthesis; glycogen biosynthesis. In terms of biological role, catalyzes the formation of the alpha-1,6-glucosidic linkages in glycogen by scission of a 1,4-alpha-linked oligosaccharide from growing alpha-1,4-glucan chains and the subsequent attachment of the oligosaccharide to the alpha-1,6 position. In Kitasatospora aureofaciens (Streptomyces aureofaciens), this protein is 1,4-alpha-glucan branching enzyme GlgB (glgB).